The primary structure comprises 417 residues: Tyrosine--tRNA ligase (417 aa).

Residue tyrosine 39 coordinates L-tyrosine. A 'HIGH' region motif is present at residues 44–53 (PTAPSLHAGG). L-tyrosine-binding residues include tyrosine 176 and glutamine 180. A 'KMSKS' region motif is present at residues 236–240 (KMGKS). Lysine 239 contacts ATP. In terms of domain architecture, S4 RNA-binding spans 350 to 417 (IGVLALMVLA…KKRHVLIRPA (68 aa)).

This sequence belongs to the class-I aminoacyl-tRNA synthetase family. TyrS type 1 subfamily. In terms of assembly, homodimer.

Its subcellular location is the cytoplasm. It catalyses the reaction tRNA(Tyr) + L-tyrosine + ATP = L-tyrosyl-tRNA(Tyr) + AMP + diphosphate + H(+). Functionally, catalyzes the attachment of tyrosine to tRNA(Tyr) in a two-step reaction: tyrosine is first activated by ATP to form Tyr-AMP and then transferred to the acceptor end of tRNA(Tyr). This chain is Tyrosine--tRNA ligase, found in Brucella abortus (strain 2308).